The following is a 322-amino-acid chain: Cytochrome f (322 aa).

A signal peptide spans 1 to 36 (MQKNRNTFSWVKEQMTRCISVSMMIYVITRASISNA). Positions 37, 57, 60, and 61 each coordinate heme. The helical transmembrane segment at 288 to 308 (IQGLLFFLASVILAQIFLVLK) threads the bilayer.

This sequence belongs to the cytochrome f family. As to quaternary structure, the 4 large subunits of the cytochrome b6-f complex are cytochrome b6, subunit IV (17 kDa polypeptide, petD), cytochrome f and the Rieske protein, while the 4 small subunits are PetG, PetL, PetM and PetN. The complex functions as a dimer. Requires heme as cofactor.

It is found in the plastid. The protein resides in the chloroplast thylakoid membrane. Its function is as follows. Component of the cytochrome b6-f complex, which mediates electron transfer between photosystem II (PSII) and photosystem I (PSI), cyclic electron flow around PSI, and state transitions. The protein is Cytochrome f of Nymphaea alba (White water-lily).